Here is a 218-residue protein sequence, read N- to C-terminus: Large ribosomal subunit protein uL3 (218 aa).

It belongs to the universal ribosomal protein uL3 family. In terms of assembly, part of the 50S ribosomal subunit. Forms a cluster with proteins L14 and L19.

One of the primary rRNA binding proteins, it binds directly near the 3'-end of the 23S rRNA, where it nucleates assembly of the 50S subunit. The polypeptide is Large ribosomal subunit protein uL3 (Brachyspira pilosicoli (Serpulina pilosicoli)).